Consider the following 125-residue polypeptide: MORF4 family-associated protein 1 (125 aa).

Residues 76–99 (ESALNHLQGAGGAEPRGPRAEKAD) form a disordered region. Residues 94–124 (RAEKADEKAQEMAKMAEMLVQLVRRIEKSES) adopt a coiled-coil conformation.

Belongs to the MORF4 family-associated protein family. Found in a complex composed of MORF4L1, MRFAP1 and RB1. Interacts via its N-terminus with MORF4L1. Interacts with CSTB and MORF4L2.

Its subcellular location is the nucleus. The protein localises to the cytoplasm. It is found in the perinuclear region. The protein is MORF4 family-associated protein 1 of Rattus norvegicus (Rat).